The chain runs to 62 residues: Small ribosomal subunit protein eS27 (62 aa).

Zn(2+) contacts are provided by C17, C20, C36, and C39. Residues 17 to 39 form a C4-type zinc finger; it reads CPECNNEQIVFGSPATVVKCLTC.

It belongs to the eukaryotic ribosomal protein eS27 family. As to quaternary structure, part of the 30S ribosomal subunit. It depends on Zn(2+) as a cofactor.

In Methanocaldococcus jannaschii (strain ATCC 43067 / DSM 2661 / JAL-1 / JCM 10045 / NBRC 100440) (Methanococcus jannaschii), this protein is Small ribosomal subunit protein eS27.